Reading from the N-terminus, the 91-residue chain is MARMVHCVKLNKEAEGLDFPPLPGELGKKIWQSVSKEAWAGWLKHQTMLINENRLNMADTRARQYLLKQTEKYFFGEGADQASGYVPPPSA.

It belongs to the Fe(2+)-trafficking protein family.

Functionally, could be a mediator in iron transactions between iron acquisition and iron-requiring processes, such as synthesis and/or repair of Fe-S clusters in biosynthetic enzymes. This is Probable Fe(2+)-trafficking protein from Ralstonia nicotianae (strain ATCC BAA-1114 / GMI1000) (Ralstonia solanacearum).